The sequence spans 314 residues: Inactive chitinase-like protein 1 (314 aa).

The signal sequence occupies residues Met1–Ala19. Residues Glu20 to Gly60 enclose the Chitin-binding type-1 domain. Intrachain disulfides connect Cys22-Cys37, Cys31-Cys43, Cys36-Cys50, Cys54-Cys58, Cys92-Cys154, Cys166-Cys174, and Cys273-Cys305.

It belongs to the glycosyl hydrolase 19 family. Chitinase class I subfamily.

Its function is as follows. Inactive chitinase-like protein that does not exhibit hydrolytic activity toward chitin. Binds strongly to chitin and possesses antifungal activity toward the fungal pathogen Altenaria alternata in plate assays. Inhibits the growth of Fusarium oxysporum on plate assays. Probably involved in defense against fungal pathogens through a mechanism that only involves carbohydrate binding. This Hevea brasiliensis (Para rubber tree) protein is Inactive chitinase-like protein 1.